The chain runs to 239 residues: Proteasome subunit beta type-6 (239 aa).

Alanine 2 is modified (N-acetylalanine). Residues 2-34 (AATLVAARGTRPAPAWGPEAIAPDWENREVSTG) constitute a propeptide, removed in mature form. The Nucleophile role is filled by threonine 35. Threonine 69 carries the post-translational modification Phosphothreonine.

This sequence belongs to the peptidase T1B family. As to quaternary structure, the 26S proteasome consists of a 20S proteasome core and two 19S regulatory subunits. The 20S proteasome core is a barrel-shaped complex made of 28 subunits that are arranged in four stacked rings. The two outer rings are each formed by seven alpha subunits, and the two inner rings are formed by seven beta subunits. The proteolytic activity is exerted by three beta-subunits PSMB5, PSMB6 and PSMB7.

The protein localises to the cytoplasm. It is found in the nucleus. It carries out the reaction Cleavage of peptide bonds with very broad specificity.. Component of the 20S core proteasome complex involved in the proteolytic degradation of most intracellular proteins. This complex plays numerous essential roles within the cell by associating with different regulatory particles. Associated with two 19S regulatory particles, forms the 26S proteasome and thus participates in the ATP-dependent degradation of ubiquitinated proteins. The 26S proteasome plays a key role in the maintenance of protein homeostasis by removing misfolded or damaged proteins that could impair cellular functions, and by removing proteins whose functions are no longer required. Associated with the PA200 or PA28, the 20S proteasome mediates ubiquitin-independent protein degradation. This type of proteolysis is required in several pathways including spermatogenesis (20S-PA200 complex) or generation of a subset of MHC class I-presented antigenic peptides (20S-PA28 complex). Within the 20S core complex, PSMB6 displays a peptidylglutamyl-hydrolyzing activity also termed postacidic or caspase-like activity, meaning that the peptides bond hydrolysis occurs directly after acidic residues. This chain is Proteasome subunit beta type-6 (PSMB6), found in Bos taurus (Bovine).